The chain runs to 266 residues: Beta-lactamase OXA-10 (266 aa).

A signal peptide spans 1–19; sequence MKTFAAYVIIACLSSTALA. Cysteines 44 and 51 form a disulfide. Residue Ser-67 is the Acyl-ester intermediate of the active site. Position 70 is an N6-carboxylysine (Lys-70). Residues Ser-115, Thr-206, Phe-208, and Arg-250 each coordinate a beta-lactam.

It belongs to the class-D beta-lactamase family. Dimer.

The protein resides in the periplasm. It catalyses the reaction a beta-lactam + H2O = a substituted beta-amino acid. With respect to regulation, activated, with respect to most beta-lactam substrates, in the presence of 0.05 M sodium bicarbonate. Functionally, class D beta-lactamase which confers resistance to the beta-lactam antibiotics, including penicillin, carbenicillin and oxacillin, and also some cephalosporins. Confers weak resistance to some carbapenems, in E.coli strain C600Z1. Acts via hydrolysis of the beta-lactam ring. Has penicillin- and cephalosporin-hydrolyzing activities. This chain is Beta-lactamase OXA-10, found in Pseudomonas aeruginosa.